A 149-amino-acid polypeptide reads, in one-letter code: Stem-specific protein TSJT1 (149 aa).

Stem-specific (active at lower levels in other organs).

The protein is Stem-specific protein TSJT1 (TSJT1) of Nicotiana tabacum (Common tobacco).